A 299-amino-acid chain; its full sequence is Oxygen-dependent coproporphyrinogen-III oxidase (299 aa).

Serine 92 is a binding site for substrate. 2 residues coordinate Mn(2+): histidine 96 and histidine 106. Histidine 106 (proton donor) is an active-site residue. Asparagine 108 to arginine 110 lines the substrate pocket. Positions 145 and 175 each coordinate Mn(2+). The tract at residues tyrosine 240–glutamate 275 is important for dimerization. Residue glycine 258–arginine 260 participates in substrate binding.

Belongs to the aerobic coproporphyrinogen-III oxidase family. In terms of assembly, homodimer. It depends on Mn(2+) as a cofactor.

The protein resides in the cytoplasm. The enzyme catalyses coproporphyrinogen III + O2 + 2 H(+) = protoporphyrinogen IX + 2 CO2 + 2 H2O. It participates in porphyrin-containing compound metabolism; protoporphyrin-IX biosynthesis; protoporphyrinogen-IX from coproporphyrinogen-III (O2 route): step 1/1. In terms of biological role, involved in the heme biosynthesis. Catalyzes the aerobic oxidative decarboxylation of propionate groups of rings A and B of coproporphyrinogen-III to yield the vinyl groups in protoporphyrinogen-IX. The chain is Oxygen-dependent coproporphyrinogen-III oxidase from Escherichia coli (strain SE11).